Here is a 231-residue protein sequence, read N- to C-terminus: Homeobox protein engrailed-1a (231 aa).

Disordered regions lie at residues 1-29 (MEDQ…AHRN), 43-105 (GCKR…KDSQ), and 121-148 (DRPS…RPRT). Residues 43–56 (GCKRERERVTRDSG) show a composition bias toward basic and acidic residues. The segment covering 68 to 102 (DGVSSSASSTVSSPVSSRQSNKVEQGSSKSSSPSK) has biased composition (low complexity). The homeobox DNA-binding region spans 143-202 (DKRPRTAFTAEQLQRLKAEFQTSRYITEQRRQALARELGLNESQIKIWFQNKRAKIKKSS).

The protein belongs to the engrailed homeobox family.

The protein resides in the nucleus. The sequence is that of Homeobox protein engrailed-1a (eng1a) from Danio rerio (Zebrafish).